The following is a 187-amino-acid chain: Sliding-clamp-loader small subunit (187 aa).

It belongs to the Tevenvirinae sliding-clamp-loader small subunit family. As to quaternary structure, the sliding-clamp-loader consists of 4 large subunits and 1 small subunit. Interacts with the sliding clamp; this interaction allows the sliding-clamp-loader to open the sliding clamp. Part of the replicase complex that includes the DNA polymerase, the polymerase clamp, the clamp loader complex, the single-stranded DNA binding protein, the primase, the helicase and the helicase assembly factor.

In terms of biological role, forms the sliding-clamp-loader together with the small subunit. The clamp loader holds the clamp in an open conformation and places it onto the DNA. The protein is Sliding-clamp-loader small subunit (62) of Escherichia coli (Bacteriophage T4).